The primary structure comprises 132 residues: UPF0102 protein Achl_2213 (132 aa).

The protein belongs to the UPF0102 family.

In Pseudarthrobacter chlorophenolicus (strain ATCC 700700 / DSM 12829 / CIP 107037 / JCM 12360 / KCTC 9906 / NCIMB 13794 / A6) (Arthrobacter chlorophenolicus), this protein is UPF0102 protein Achl_2213.